A 371-amino-acid polypeptide reads, in one-letter code: Cytochrome b (371 aa).

Helical transmembrane passes span 25 to 45 (FGSM…FLAV), 69 to 90 (WMMQ…YIHI), 105 to 125 (WLSG…GYVL), and 170 to 190 (FFAL…LHIM). Heme b-binding residues include histidine 75 and histidine 89. 2 residues coordinate heme b: histidine 174 and histidine 188. Histidine 193 is a binding site for a ubiquinone. 4 helical membrane-spanning segments follow: residues 218–238 (YKDL…VSFL), 280–300 (LWGA…PFTH), 312–332 (IMQL…WAAT), and 339–358 (FTMI…IMNP).

This sequence belongs to the cytochrome b family. As to quaternary structure, the cytochrome bc1 complex contains 3 respiratory subunits (MT-CYB, CYC1 and UQCRFS1), 2 core proteins (UQCRC1 and UQCRC2) and probably 6 low-molecular weight proteins. It depends on heme b as a cofactor.

It localises to the mitochondrion inner membrane. Functionally, component of the ubiquinol-cytochrome c reductase complex (complex III or cytochrome b-c1 complex) that is part of the mitochondrial respiratory chain. The b-c1 complex mediates electron transfer from ubiquinol to cytochrome c. Contributes to the generation of a proton gradient across the mitochondrial membrane that is then used for ATP synthesis. The chain is Cytochrome b (MT-CYB) from Eryx miliaris nogaiorum (Black sand boa).